The chain runs to 402 residues: MAANSTPEGPLPVGEVSRLIGGWIDRLGAVWVEGQITQLSRRPGAGVVFLTLRDPSYDISVSVTCYRQVFDAVADVVGEGARVVVHAKPEWYAPRGQLSLRAAEIKPVGVGELLARLEQLKKALAREGLFAAERKQPLPFLPQLIGLVCGRASAAERDVLENARHRWPAVRFEVRNVPVQGVHAVPQVVQAVKELDARDDVDVIVVARGGGSVEDLLPFSDEQLVRAVAACRTPVVSAIGHEPDSPLLDLVADLRASTPTDAAKKVVPDVGEEYERVRLLRDRARRCVAAFVDREERGLAHALARPSIQDPHRMIEERAEQVTALLDRGRRSLRHHLDRADSELTHTHARVVALSPAATLKRGYAVLQRADGHAVRDPGEVEPGETLRARVSEGDFSVRVDA.

The protein belongs to the XseA family. Heterooligomer composed of large and small subunits.

Its subcellular location is the cytoplasm. The enzyme catalyses Exonucleolytic cleavage in either 5'- to 3'- or 3'- to 5'-direction to yield nucleoside 5'-phosphates.. In terms of biological role, bidirectionally degrades single-stranded DNA into large acid-insoluble oligonucleotides, which are then degraded further into small acid-soluble oligonucleotides. This Streptomyces coelicolor (strain ATCC BAA-471 / A3(2) / M145) protein is Exodeoxyribonuclease 7 large subunit.